We begin with the raw amino-acid sequence, 77 residues long: Large ribosomal subunit protein bL31 (77 aa).

The protein belongs to the bacterial ribosomal protein bL31 family. Type A subfamily. Part of the 50S ribosomal subunit.

Its function is as follows. Binds the 23S rRNA. This Synechococcus elongatus (strain ATCC 33912 / PCC 7942 / FACHB-805) (Anacystis nidulans R2) protein is Large ribosomal subunit protein bL31.